The primary structure comprises 209 residues: Large ribosomal subunit protein uL3 (209 aa).

The span at 112 to 122 (GTTRGHGTQGN) shows a compositional bias: polar residues. A disordered region spans residues 112 to 146 (GTTRGHGTQGNIKRWGQSRGPETHGSRYHRIPGSM).

This sequence belongs to the universal ribosomal protein uL3 family. As to quaternary structure, part of the 50S ribosomal subunit. Forms a cluster with proteins L14 and L19.

In terms of biological role, one of the primary rRNA binding proteins, it binds directly near the 3'-end of the 23S rRNA, where it nucleates assembly of the 50S subunit. In Lactobacillus gasseri (strain ATCC 33323 / DSM 20243 / BCRC 14619 / CIP 102991 / JCM 1131 / KCTC 3163 / NCIMB 11718 / NCTC 13722 / AM63), this protein is Large ribosomal subunit protein uL3.